Here is a 176-residue protein sequence, read N- to C-terminus: NAD(P)H-quinone oxidoreductase subunit 6, chloroplastic (176 aa).

Helical transmembrane passes span 10–30 (ILML…VLLT), 33–53 (IYSA…YFLL), 60–80 (VAQL…AVMF), 95–115 (IGDG…MTTI), and 152–172 (FYLP…GAIT).

It belongs to the complex I subunit 6 family. NDH is composed of at least 16 different subunits, 5 of which are encoded in the nucleus.

Its subcellular location is the plastid. The protein localises to the chloroplast thylakoid membrane. The catalysed reaction is a plastoquinone + NADH + (n+1) H(+)(in) = a plastoquinol + NAD(+) + n H(+)(out). The enzyme catalyses a plastoquinone + NADPH + (n+1) H(+)(in) = a plastoquinol + NADP(+) + n H(+)(out). In terms of biological role, NDH shuttles electrons from NAD(P)H:plastoquinone, via FMN and iron-sulfur (Fe-S) centers, to quinones in the photosynthetic chain and possibly in a chloroplast respiratory chain. The immediate electron acceptor for the enzyme in this species is believed to be plastoquinone. Couples the redox reaction to proton translocation, and thus conserves the redox energy in a proton gradient. This Triticum aestivum (Wheat) protein is NAD(P)H-quinone oxidoreductase subunit 6, chloroplastic (ndhG).